We begin with the raw amino-acid sequence, 290 residues long: Acetylglutamate kinase (290 aa).

Substrate-binding positions include 65–66 (GG), Arg87, and Asn186.

This sequence belongs to the acetylglutamate kinase family. ArgB subfamily.

Its subcellular location is the cytoplasm. The enzyme catalyses N-acetyl-L-glutamate + ATP = N-acetyl-L-glutamyl 5-phosphate + ADP. It participates in amino-acid biosynthesis; L-arginine biosynthesis; N(2)-acetyl-L-ornithine from L-glutamate: step 2/4. In terms of biological role, catalyzes the ATP-dependent phosphorylation of N-acetyl-L-glutamate. The sequence is that of Acetylglutamate kinase from Mycolicibacterium gilvum (strain PYR-GCK) (Mycobacterium gilvum (strain PYR-GCK)).